The primary structure comprises 165 residues: NADPH-dependent 7-cyano-7-deazaguanine reductase (165 aa).

Cysteine 56 acts as the Thioimide intermediate in catalysis. Residue aspartate 63 is the Proton donor of the active site. Substrate is bound by residues 78-80 (VES) and 97-98 (HE). The Mg(2+) site is built by aspartate 163 and arginine 165.

It belongs to the GTP cyclohydrolase I family. QueF type 1 subfamily. Forms an asymmetric tunnel-fold homodecamer of two head-to-head facing pentamers, harboring 10 active sites at the intersubunit interfaces. The cofactor is Does not require a metal cofactor..

It localises to the cytoplasm. The catalysed reaction is 7-aminomethyl-7-carbaguanine + 2 NADP(+) = 7-cyano-7-deazaguanine + 2 NADPH + 3 H(+). The protein operates within tRNA modification; tRNA-queuosine biosynthesis. Activity is strongly inhibited by Cu(2+) and Fe(3+). Catalyzes the NADPH-dependent reduction of 7-cyano-7-deazaguanine (preQ0) to 7-aminomethyl-7-deazaguanine (preQ1), a late step in the queuosine pathway. This is NADPH-dependent 7-cyano-7-deazaguanine reductase (queF) from Bacillus subtilis (strain 168).